Here is a 394-residue protein sequence, read N- to C-terminus: Elongation factor Tu (394 aa).

One can recognise a tr-type G domain in the interval 10-204; that stretch reads KPHVNVGTIG…AVDSYIPQPE (195 aa). The tract at residues 19–26 is G1; that stretch reads GHVDHGKT. A GTP-binding site is contributed by 19–26; the sequence is GHVDHGKT. T26 is a Mg(2+) binding site. Residues 60 to 64 are G2; sequence GITIS. The tract at residues 81–84 is G3; that stretch reads DCPG. GTP is bound by residues 81–85 and 136–139; these read DCPGH and NKCD. Residues 136-139 form a G4 region; that stretch reads NKCD. The interval 174–176 is G5; it reads SAV.

The protein belongs to the TRAFAC class translation factor GTPase superfamily. Classic translation factor GTPase family. EF-Tu/EF-1A subfamily. Monomer.

The protein localises to the cytoplasm. It carries out the reaction GTP + H2O = GDP + phosphate + H(+). GTP hydrolase that promotes the GTP-dependent binding of aminoacyl-tRNA to the A-site of ribosomes during protein biosynthesis. This chain is Elongation factor Tu, found in Akkermansia muciniphila (strain ATCC BAA-835 / DSM 22959 / JCM 33894 / BCRC 81048 / CCUG 64013 / CIP 107961 / Muc).